The chain runs to 142 residues: MFFGEFEYKLDEKGRFPLPPGIRPSMKDGLILAPGTGEKCIYAYPLCEWKKLSESLKSTTVAPSKMRRLNRALFALAFDVNLDAQGRLTLPAPLKSYAGVNIEVIVAGVNNYIEIWDKETWESEKKASQEQAWQIIETLEGN.

SpoVT-AbrB domains follow at residues 5–48 (EFEY…PLCE) and 77–120 (AFDV…DKET).

This sequence belongs to the MraZ family. In terms of assembly, forms oligomers.

Its subcellular location is the cytoplasm. It localises to the nucleoid. This chain is Transcriptional regulator MraZ, found in Dehalococcoides mccartyi (strain ATCC BAA-2266 / KCTC 15142 / 195) (Dehalococcoides ethenogenes (strain 195)).